The primary structure comprises 791 residues: Phenylalanine--tRNA ligase beta subunit (791 aa).

In terms of domain architecture, tRNA-binding spans 39–149 (GDEIQNVVTG…SDTAIGKDIK (111 aa)). A B5 domain is found at 403 to 478 (IKERNLKVDS…RIYGYNNIPT (76 aa)). Asp456, Asp462, Glu465, and Glu466 together coordinate Mg(2+). Residues 698–791 (PKFPAVDRDM…LENNLGAELR (94 aa)) enclose the FDX-ACB domain.

It belongs to the phenylalanyl-tRNA synthetase beta subunit family. Type 1 subfamily. Tetramer of two alpha and two beta subunits. The cofactor is Mg(2+).

Its subcellular location is the cytoplasm. The catalysed reaction is tRNA(Phe) + L-phenylalanine + ATP = L-phenylalanyl-tRNA(Phe) + AMP + diphosphate + H(+). The chain is Phenylalanine--tRNA ligase beta subunit from Clostridium tetani (strain Massachusetts / E88).